The sequence spans 158 residues: MTICFLLFSSYYFSNISPQNPLFKKNFLQQLSPQGFGFYSKSPTEENISFHTKENLKLPNALPNNFFGIKREGRVQAIELGKIVENIDPKNWKTCENNNSCTNLEKQIKPIKVIKNEDYIHLSKGEYLIYRQKPLSWYWIDFKQTTSFERKVLKIKIV.

It localises to the cytoplasm. Required for the maturation of SdpC to SDP. Not required for SdpC signal peptide cleavage, secretion from the cell or disulfide bond formation. The chain is Sporulation-delaying protein SdpA from Bacillus subtilis (strain 168).